The primary structure comprises 462 residues: Cysteine desulfurase, mitochondrial (462 aa).

Residues 132–133, Asn-212, Gln-240, and 260–262 each bind pyridoxal 5'-phosphate; these read AT and SGH. Lys-263 carries the N6-(pyridoxal phosphate)lysine modification. Thr-300 is a pyridoxal 5'-phosphate binding site. Cys-386 functions as the Cysteine persulfide intermediate in the catalytic mechanism. Residue Cys-386 coordinates [2Fe-2S] cluster.

Belongs to the class-V pyridoxal-phosphate-dependent aminotransferase family. NifS/IscS subfamily. Component of the mitochondrial core iron-sulfur cluster (ISC) assembly complex at least composed of the cystein desulfurase Nfs1, the scaffold protein IscU, the accessory protein bcn92/Isd11/Lyrm4, and probably fh/frataxin. Interacts with bcn92/Isd11/Lyrm4 and IscU. Pyridoxal 5'-phosphate is required as a cofactor. As to expression, ubiquitous expression at high levels in any life stage.

The protein resides in the mitochondrion. The protein localises to the nucleus. The catalysed reaction is (sulfur carrier)-H + L-cysteine = (sulfur carrier)-SH + L-alanine. Its activity is regulated as follows. Active when in complex with bcn92/Isd11/Lyrm4. L-cysteine binding kinetics are reduced in the presence of bcn92/Isd11/Lyrm4 and IscU. Activity is regulated by other components of the mitochondrial core iron-sulfur cluster (ISC) complex; Activity is reduced in the presence of IscU but enhanced when both IscU and fh/frataxin are present. Functionally, catalyzes the removal of elemental sulfur from cysteine to produce alanine. It supplies the inorganic sulfur for iron-sulfur (Fe-S) clusters. The polypeptide is Cysteine desulfurase, mitochondrial (Drosophila melanogaster (Fruit fly)).